The primary structure comprises 375 residues: MKFELDTTDGRARRGRLVFDRGVVETPAFMPVGTYGTVKGMTPEEVEATGAQIILGNTFHLWLRPGQEIMKLHGDLHDFMQWKGPILTDSGGFQVFSLGDIRKITEQGVHFRNPINGDPIFLDPEKSMEIQYDLGSDIVMIFDECTPYPADWDYAKRSMEMSLRWAKRSRDRFDSLGNKNALFGIIQGSVYEDLRDISVKGLVEIGFDGYAVGGLAVGEPKADMHRILEHVCPQLPADKPRYLMGVGKPEDLVEGVRRGIDMFDCVMPTRNARNGHLFVTDGVVKIRNAKHKSDTSPLDAECDCYTCRNYSRAYLHHLDRCNEILGARLNTIHNLRYYQRLMAGLRKAIEEGKLESFVTEFYQRQGRPVPPLNVD.

The active-site Proton acceptor is the Asp-89. Substrate is bound by residues 89-93 (DSGGF), Asp-143, Gln-187, and Gly-214. Residues 245-251 (GVGKPED) form an RNA binding region. The Nucleophile role is filled by Asp-264. The segment at 269–273 (TRNAR) is RNA binding; important for wobble base 34 recognition. Residues Cys-302, Cys-304, Cys-307, and His-333 each coordinate Zn(2+).

It belongs to the queuine tRNA-ribosyltransferase family. In terms of assembly, homodimer. Within each dimer, one monomer is responsible for RNA recognition and catalysis, while the other monomer binds to the replacement base PreQ1. It depends on Zn(2+) as a cofactor.

It carries out the reaction 7-aminomethyl-7-carbaguanine + guanosine(34) in tRNA = 7-aminomethyl-7-carbaguanosine(34) in tRNA + guanine. The protein operates within tRNA modification; tRNA-queuosine biosynthesis. Catalyzes the base-exchange of a guanine (G) residue with the queuine precursor 7-aminomethyl-7-deazaguanine (PreQ1) at position 34 (anticodon wobble position) in tRNAs with GU(N) anticodons (tRNA-Asp, -Asn, -His and -Tyr). Catalysis occurs through a double-displacement mechanism. The nucleophile active site attacks the C1' of nucleotide 34 to detach the guanine base from the RNA, forming a covalent enzyme-RNA intermediate. The proton acceptor active site deprotonates the incoming PreQ1, allowing a nucleophilic attack on the C1' of the ribose to form the product. After dissociation, two additional enzymatic reactions on the tRNA convert PreQ1 to queuine (Q), resulting in the hypermodified nucleoside queuosine (7-(((4,5-cis-dihydroxy-2-cyclopenten-1-yl)amino)methyl)-7-deazaguanosine). The sequence is that of Queuine tRNA-ribosyltransferase from Salmonella paratyphi A (strain ATCC 9150 / SARB42).